The sequence spans 207 residues: MPKVALYNQNGQTVGEIELNDAVFGIEPNKHVLFEAVIMQRASMRQGTHKTKNRAEVSGGGRKPWRQKGTGRARQGSIRAPQWRGGGTVFGPVPRSYSYKLPKKVRRLAIKSALSSKVLENDIVVLDQLSLEAPKTKEMVKILNNLSVDRKALIVTDELNENVYLSARNIPGVKVVPANGINVLDVLNHDKLVITKAAVEKVEEVLA.

A disordered region spans residues 44-78 (MRQGTHKTKNRAEVSGGGRKPWRQKGTGRARQGSI).

Belongs to the universal ribosomal protein uL4 family. As to quaternary structure, part of the 50S ribosomal subunit.

One of the primary rRNA binding proteins, this protein initially binds near the 5'-end of the 23S rRNA. It is important during the early stages of 50S assembly. It makes multiple contacts with different domains of the 23S rRNA in the assembled 50S subunit and ribosome. Functionally, this protein when expressed in E.coli represses the endogenous S10 operon; this may not occur in B.stearothermophilus however. Its function is as follows. Forms part of the polypeptide exit tunnel. The chain is Large ribosomal subunit protein uL4 (rplD) from Geobacillus stearothermophilus (Bacillus stearothermophilus).